A 133-amino-acid polypeptide reads, in one-letter code: Small ribosomal subunit protein uS8 (133 aa).

Belongs to the universal ribosomal protein uS8 family. In terms of assembly, part of the 30S ribosomal subunit. Contacts proteins S5 and S12.

One of the primary rRNA binding proteins, it binds directly to 16S rRNA central domain where it helps coordinate assembly of the platform of the 30S subunit. This is Small ribosomal subunit protein uS8 from Protochlamydia amoebophila (strain UWE25).